Here is a 414-residue protein sequence, read N- to C-terminus: Na(+)-translocating NADH-quinone reductase subunit B (414 aa).

4 helical membrane passes run 23–40 (WFAL…PGLV), 56–76 (IMIM…YNAG), 129–149 (FLPI…LFCM), and 164–184 (ILFA…LGIT). Threonine 236 carries the post-translational modification FMN phosphoryl threonine. 5 helical membrane passes run 268–288 (IPGS…AMIV), 297–317 (IIAG…VIGS), 322–342 (MFSM…GMFF), 358–378 (WWYG…NPAY), and 381–401 (GMML…HLVV).

The protein belongs to the NqrB/RnfD family. In terms of assembly, composed of six subunits; NqrA, NqrB, NqrC, NqrD, NqrE and NqrF. Requires FMN as cofactor.

The protein localises to the cell inner membrane. It catalyses the reaction a ubiquinone + n Na(+)(in) + NADH + H(+) = a ubiquinol + n Na(+)(out) + NAD(+). In terms of biological role, NQR complex catalyzes the reduction of ubiquinone-1 to ubiquinol by two successive reactions, coupled with the transport of Na(+) ions from the cytoplasm to the periplasm. NqrA to NqrE are probably involved in the second step, the conversion of ubisemiquinone to ubiquinol. This is Na(+)-translocating NADH-quinone reductase subunit B from Vibrio vulnificus (strain CMCP6).